The chain runs to 186 residues: Der GTPase-activating protein YihI (186 aa).

The segment at 1-65 (MARTKKTRRI…AGSRHSAVDT (65 aa)) is disordered. Composition is skewed to basic and acidic residues over residues 9 to 25 (RITD…RPEN) and 34 to 45 (TRYELDAKSREE).

It belongs to the YihI family. As to quaternary structure, interacts with Der.

Functionally, a GTPase-activating protein (GAP) that modifies Der/EngA GTPase function. May play a role in ribosome biogenesis. In Histophilus somni (strain 129Pt) (Haemophilus somnus), this protein is Der GTPase-activating protein YihI.